The chain runs to 185 residues: MIDDTLLEAEEKMDKAVSVAKDDFANIRTGRITPAVFGKVLVDYYGAPTPVQQLASFHIPEPRMVIITPYDKSSLGAVEKAVRDSDLGVNPSNDGTIIRCVFPELSEQRRRDLVKVARTKAEEARVSIRNIRRHAKDAIDRIVRDGEAGEDEGRRGEKDLDEATHRYVSQVDELLRIKESDLLSV.

This sequence belongs to the RRF family.

It localises to the cytoplasm. Its function is as follows. Responsible for the release of ribosomes from messenger RNA at the termination of protein biosynthesis. May increase the efficiency of translation by recycling ribosomes from one round of translation to another. The sequence is that of Ribosome-recycling factor from Parafrankia sp. (strain EAN1pec).